The primary structure comprises 618 residues: 1-deoxy-D-xylulose-5-phosphate synthase (618 aa).

Thiamine diphosphate is bound by residues His76 and 117 to 119; that span reads GHS. Asp148 is a Mg(2+) binding site. Thiamine diphosphate is bound by residues 149 to 150, Asn177, Tyr284, and Glu364; that span reads GA. Asn177 lines the Mg(2+) pocket.

It belongs to the transketolase family. DXPS subfamily. As to quaternary structure, homodimer. Requires Mg(2+) as cofactor. The cofactor is thiamine diphosphate.

The catalysed reaction is D-glyceraldehyde 3-phosphate + pyruvate + H(+) = 1-deoxy-D-xylulose 5-phosphate + CO2. It functions in the pathway metabolic intermediate biosynthesis; 1-deoxy-D-xylulose 5-phosphate biosynthesis; 1-deoxy-D-xylulose 5-phosphate from D-glyceraldehyde 3-phosphate and pyruvate: step 1/1. In terms of biological role, catalyzes the acyloin condensation reaction between C atoms 2 and 3 of pyruvate and glyceraldehyde 3-phosphate to yield 1-deoxy-D-xylulose-5-phosphate (DXP). The protein is 1-deoxy-D-xylulose-5-phosphate synthase of Francisella philomiragia subsp. philomiragia (strain ATCC 25017 / CCUG 19701 / FSC 153 / O#319-036).